The sequence spans 216 residues: Uracil phosphoribosyltransferase (216 aa).

Residues R30, R39, 73-76 (ASKI), and K75 contribute to the GTP site. R83 contacts 5-phospho-alpha-D-ribose 1-diphosphate. K100 lines the GTP pocket. R108 contacts 5-phospho-alpha-D-ribose 1-diphosphate. Residue R129 participates in GTP binding. Residues D135 and 135-143 (DPMLATGGT) each bind 5-phospho-alpha-D-ribose 1-diphosphate. Y199 lines the D-ribose 5-phosphate pocket. Uracil-binding positions include I200 and 205–207 (GDF). D206 serves as a coordination point for 5-phospho-alpha-D-ribose 1-diphosphate.

It belongs to the UPRTase family. Mg(2+) serves as cofactor.

It catalyses the reaction UMP + diphosphate = 5-phospho-alpha-D-ribose 1-diphosphate + uracil. It participates in pyrimidine metabolism; UMP biosynthesis via salvage pathway; UMP from uracil: step 1/1. Allosterically activated by GTP. Its function is as follows. Catalyzes the conversion of uracil and 5-phospho-alpha-D-ribose 1-diphosphate (PRPP) to UMP and diphosphate. In Dictyostelium discoideum (Social amoeba), this protein is Uracil phosphoribosyltransferase (uprt).